Here is a 220-residue protein sequence, read N- to C-terminus: UPF0319 protein YccT (220 aa).

The signal sequence occupies residues 1 to 20 (MKTGIVTTLIALCLPVSVFA).

This sequence belongs to the UPF0319 family.

The polypeptide is UPF0319 protein YccT (Shigella flexneri serotype 5b (strain 8401)).